The primary structure comprises 115 residues: Guanylin (115 aa).

The first 21 residues, 1–21 (MNAFLLSALCLLGAWAALAGG), serve as a signal peptide directing secretion. Cystine bridges form between Cys-69–Cys-82, Cys-104–Cys-112, and Cys-107–Cys-115.

This sequence belongs to the guanylin family. As to expression, highly expressed in ileum and colon. Found in plasma.

It is found in the secreted. In terms of biological role, endogenous activator of intestinal guanylate cyclase. It stimulates this enzyme through the same receptor binding region as the heat-stable enterotoxins. The polypeptide is Guanylin (GUCA2A) (Homo sapiens (Human)).